A 517-amino-acid chain; its full sequence is Diacylglycerol O-acyltransferase 1C (517 aa).

The interval 1–82 (MAISDVPAAA…NVGAAANDAG (82 aa)) is disordered. The segment covering 8–17 (AAAGTTATTT) has biased composition (low complexity). Residues 53–64 (ITDDDNIKDHKP) are compositionally biased toward basic and acidic residues. A compositionally biased stretch (low complexity) spans 71–81 (DDNVGAAANDA). 7 helical membrane passes run 121–141 (HAGL…RLII), 165–185 (WPLF…FVVE), 197–217 (VVVL…VLVI), 222–242 (SAFV…LKLV), 272–292 (YPYT…TLCY), 305–325 (GWVF…GFII), and 361–381 (VWLC…AELV). Positions 388 to 394 (FYKDWWN) match the FYXDWWN motif motif. Helical transmembrane passes span 429–449 (GAAS…CIAV), 451–471 (CHMF…LVLI), and 484–504 (VGNM…SVLL). The active site involves histidine 443.

Belongs to the membrane-bound acyltransferase family. Sterol o-acyltransferase subfamily.

It is found in the endoplasmic reticulum membrane. The enzyme catalyses an acyl-CoA + a 1,2-diacyl-sn-glycerol = a triacyl-sn-glycerol + CoA. Its pathway is glycerolipid metabolism; triacylglycerol biosynthesis. In terms of biological role, involved in triacylglycerol (TAG) synthesis. Catalyzes the acylation of the sn-3 hydroxy group of sn-1,2-diacylglycerol using acyl-CoA. The polypeptide is Diacylglycerol O-acyltransferase 1C (Glycine max (Soybean)).